The following is a 69-amino-acid chain: Amphipathic peptide OcyC2 (69 aa).

An N-terminal signal peptide occupies residues 1-23 (MKTQFAILMIAVVLMQMLVQTEG). Ile-37 carries the post-translational modification Isoleucine amide. The propeptide occupies 41–69 (GLKKLDQLDDTFDSDLSDADVKLLREMFK).

The protein belongs to the non-disulfide-bridged peptide (NDBP) superfamily. Short antimicrobial peptide (group 4) family. Expressed by the venom gland.

Its subcellular location is the secreted. It localises to the target cell membrane. In terms of biological role, amphipathic peptide with antimicrobial activity. Shows antifungal activity with MIC values ranging from 25 to 200 uM. Does not show antifungal activity against Candida glabrata (ATCC90030) and Candida parapsilosis (ATCC22019) (MIC&gt;400 uM). This Opisthacanthus cayaporum (South American scorpion) protein is Amphipathic peptide OcyC2.